The primary structure comprises 149 residues: Transcriptional repressor NrdR (149 aa).

A zinc finger spans residues 3–34; it reads CPFCNADDTKVIDSRLVADGHQVRRRRECLVC. The ATP-cone domain occupies 49-139; the sequence is PRVIKSNGVR…VYRSFEDIRE (91 aa).

It belongs to the NrdR family. Requires Zn(2+) as cofactor.

Functionally, negatively regulates transcription of bacterial ribonucleotide reductase nrd genes and operons by binding to NrdR-boxes. The sequence is that of Transcriptional repressor NrdR from Tolumonas auensis (strain DSM 9187 / NBRC 110442 / TA 4).